The primary structure comprises 371 residues: Putative glutamate--cysteine ligase 2 (371 aa).

This sequence belongs to the glutamate--cysteine ligase type 2 family. YbdK subfamily.

It catalyses the reaction L-cysteine + L-glutamate + ATP = gamma-L-glutamyl-L-cysteine + ADP + phosphate + H(+). In terms of biological role, ATP-dependent carboxylate-amine ligase which exhibits weak glutamate--cysteine ligase activity. The polypeptide is Putative glutamate--cysteine ligase 2 (Cupriavidus taiwanensis (strain DSM 17343 / BCRC 17206 / CCUG 44338 / CIP 107171 / LMG 19424 / R1) (Ralstonia taiwanensis (strain LMG 19424))).